Consider the following 510-residue polypeptide: 2,3-bisphosphoglycerate-independent phosphoglycerate mutase (510 aa).

Mn(2+) is bound by residues Asp12 and Ser62. The active-site Phosphoserine intermediate is Ser62. Substrate-binding positions include His123, 152-153 (RD), Arg184, Arg190, 257-260 (RADR), and Lys331. The Mn(2+) site is built by Asp399, His403, Asp440, His441, and His458.

Belongs to the BPG-independent phosphoglycerate mutase family. In terms of assembly, monomer. Mn(2+) is required as a cofactor.

The enzyme catalyses (2R)-2-phosphoglycerate = (2R)-3-phosphoglycerate. It functions in the pathway carbohydrate degradation; glycolysis; pyruvate from D-glyceraldehyde 3-phosphate: step 3/5. In terms of biological role, catalyzes the interconversion of 2-phosphoglycerate and 3-phosphoglycerate. This Lawsonia intracellularis (strain PHE/MN1-00) protein is 2,3-bisphosphoglycerate-independent phosphoglycerate mutase.